The sequence spans 1503 residues: Rho GTPase-activating protein 5 (1503 aa).

FF domains follow at residues 267-325, 366-420, 427-481, and 482-548; these read QLVV…HIEQ, KLME…HVQH, RIEM…HQRE, and IVEK…HIGF. Tyr-550 carries the post-translational modification 3'-nitrotyrosine. Residues Ser-590 and Ser-765 each carry the phosphoserine modification. A pG1 pseudoGTPase domain is found at 590 to 763; sequence STNIDKVNLF…LESVKHNLDV (174 aa). The 166-residue stretch at 779–944 folds into the pG2 pseudoGTPase domain; that stretch reads RIVMCAMCGD…FSDVLEKKNM (166 aa). A phosphoserine mark is found at Ser-951 and Ser-968. 3 disordered regions span residues 975 to 1004, 1022 to 1050, and 1069 to 1091; these read YNNY…LPTP, HSTP…PKTN, and NPRK…SDNY. Pro residues predominate over residues 1036–1045; the sequence is VPPPIKPKPV. Ser-1115 carries the phosphoserine modification. 2 disordered regions span residues 1129–1157 and 1169–1255; these read NTQG…YKYK and YRRT…TRRN. Over residues 1141 to 1151 the composition is skewed to basic and acidic residues; sequence RTSKGHGERRP. Residues Ser-1196, Ser-1203, and Ser-1219 each carry the phosphoserine modification. One can recognise a Rho-GAP domain in the interval 1263 to 1450; the sequence is MPLQDLVTAE…TFIQQCQFFF (188 aa).

As to quaternary structure, may interact with RASA1/p120GAP. In terms of tissue distribution, expressed in spinal cord, cerebellum, kidney, testis and lung.

Its subcellular location is the cytoplasm. The protein localises to the cell membrane. Its function is as follows. GTPase-activating protein for Rho family members. The polypeptide is Rho GTPase-activating protein 5 (Arhgap5) (Mus musculus (Mouse)).